A 262-amino-acid chain; its full sequence is 5'-nucleotidase SurE (262 aa).

4 residues coordinate a divalent metal cation: Asp-8, Asp-9, Ser-39, and Asn-91.

Belongs to the SurE nucleotidase family. It depends on a divalent metal cation as a cofactor.

It localises to the cytoplasm. The catalysed reaction is a ribonucleoside 5'-phosphate + H2O = a ribonucleoside + phosphate. In terms of biological role, nucleotidase that shows phosphatase activity on nucleoside 5'-monophosphates. In Geobacter sulfurreducens (strain ATCC 51573 / DSM 12127 / PCA), this protein is 5'-nucleotidase SurE.